The chain runs to 534 residues: Lariat debranching enzyme (534 aa).

A divalent metal cation is bound by residues Cys8, His10, Asp39, and Asn84. The lariat recognition loop stretch occupies residues 124-154 (SGIFKGHDFLRGHHEFPPYTDSTCRSVYHVR). 3 residues coordinate a divalent metal cation: His174, His226, and His228. Disordered stretches follow at residues 242 to 275 (KLGD…PPPS) and 501 to 534 (TETP…AQED).

The protein belongs to the lariat debranching enzyme family. Requires Fe(2+) as cofactor. Zn(2+) serves as cofactor. Mn(2+) is required as a cofactor.

Its subcellular location is the nucleus. With respect to regulation, active in presence of diverse metals including Fe(2+), Zn(2+), Mn(2+). Binds two metal cations in two adjacent alpha and beta metal-binding pockets. In terms of biological role, cleaves the 2'-5' phosphodiester linkage at the branch point of lariat intron pre-mRNAs after splicing and converts them into linear molecules that are subsequently degraded. It thereby facilitates ribonucleotide turnover. The sequence is that of Lariat debranching enzyme (ldbr) from Drosophila melanogaster (Fruit fly).